A 167-amino-acid chain; its full sequence is Small ribosomal subunit protein uS5 (167 aa).

Positions 12-75 constitute an S5 DRBM domain; the sequence is LREKLITINR…ERARGGMRTV (64 aa).

This sequence belongs to the universal ribosomal protein uS5 family. As to quaternary structure, part of the 30S ribosomal subunit. Contacts proteins S4 and S8.

Its function is as follows. With S4 and S12 plays an important role in translational accuracy. Functionally, located at the back of the 30S subunit body where it stabilizes the conformation of the head with respect to the body. This chain is Small ribosomal subunit protein uS5, found in Halorhodospira halophila (strain DSM 244 / SL1) (Ectothiorhodospira halophila (strain DSM 244 / SL1)).